Here is a 203-residue protein sequence, read N- to C-terminus: Holliday junction branch migration complex subunit RuvA (203 aa).

A domain I region spans residues 1–64 (MIGRLRGIIL…EDAQLLYGFN (64 aa)). The domain II stretch occupies residues 65–142 (NKQERTLFKE…KGLHGDLFTP (78 aa)). Residues 143–154 (AADLVLTSPASP) are flexible linker. The segment at 155 to 203 (ATDDAEQEAVAALVALGYKPQEASRMVSKIARPDASSETLIREALRAAL) is domain III.

The protein belongs to the RuvA family. In terms of assembly, homotetramer. Forms an RuvA(8)-RuvB(12)-Holliday junction (HJ) complex. HJ DNA is sandwiched between 2 RuvA tetramers; dsDNA enters through RuvA and exits via RuvB. An RuvB hexamer assembles on each DNA strand where it exits the tetramer. Each RuvB hexamer is contacted by two RuvA subunits (via domain III) on 2 adjacent RuvB subunits; this complex drives branch migration. In the full resolvosome a probable DNA-RuvA(4)-RuvB(12)-RuvC(2) complex forms which resolves the HJ.

Its subcellular location is the cytoplasm. Functionally, the RuvA-RuvB-RuvC complex processes Holliday junction (HJ) DNA during genetic recombination and DNA repair, while the RuvA-RuvB complex plays an important role in the rescue of blocked DNA replication forks via replication fork reversal (RFR). RuvA specifically binds to HJ cruciform DNA, conferring on it an open structure. The RuvB hexamer acts as an ATP-dependent pump, pulling dsDNA into and through the RuvAB complex. HJ branch migration allows RuvC to scan DNA until it finds its consensus sequence, where it cleaves and resolves the cruciform DNA. The protein is Holliday junction branch migration complex subunit RuvA of Citrobacter koseri (strain ATCC BAA-895 / CDC 4225-83 / SGSC4696).